A 106-amino-acid chain; its full sequence is Large ribosomal subunit protein bL21 (106 aa).

Belongs to the bacterial ribosomal protein bL21 family. Part of the 50S ribosomal subunit. Contacts protein L20.

This protein binds to 23S rRNA in the presence of protein L20. This Xylella fastidiosa (strain 9a5c) protein is Large ribosomal subunit protein bL21.